A 310-amino-acid chain; its full sequence is ADP-L-glycero-D-manno-heptose-6-epimerase (310 aa).

Residues 10–11 (FI), 31–32 (DN), Lys-38, Lys-53, 75–79 (EGACS), and Asn-92 each bind NADP(+). The active-site Proton acceptor is the Tyr-140. Lys-144 contacts NADP(+). A substrate-binding site is contributed by Asn-169. NADP(+) contacts are provided by Val-170 and Lys-178. Residue Lys-178 is the Proton acceptor of the active site. Substrate-binding positions include Ser-180, His-187, 201–204 (FEGS), Arg-209, and Tyr-272.

This sequence belongs to the NAD(P)-dependent epimerase/dehydratase family. HldD subfamily. In terms of assembly, homopentamer. It depends on NADP(+) as a cofactor.

It carries out the reaction ADP-D-glycero-beta-D-manno-heptose = ADP-L-glycero-beta-D-manno-heptose. The protein operates within nucleotide-sugar biosynthesis; ADP-L-glycero-beta-D-manno-heptose biosynthesis; ADP-L-glycero-beta-D-manno-heptose from D-glycero-beta-D-manno-heptose 7-phosphate: step 4/4. Functionally, catalyzes the interconversion between ADP-D-glycero-beta-D-manno-heptose and ADP-L-glycero-beta-D-manno-heptose via an epimerization at carbon 6 of the heptose. This Salmonella newport (strain SL254) protein is ADP-L-glycero-D-manno-heptose-6-epimerase.